The sequence spans 930 residues: Translation initiation factor IF-2 (930 aa).

Residues 27–342 (LGLDVKSHSS…APKPVTERKF (316 aa)) are disordered. Positions 52–103 (KAAAPQAPAEKPVAAQPSPQKTPAKEAAPVKAEPTEAKAAAQPEAKTETAAP) are enriched in low complexity. Basic and acidic residues-rich tracts occupy residues 112 to 128 (FKAEREARAKEEAERRK) and 136 to 178 (QNKE…DGRR). Over residues 183–195 (HQGFNGQKRQQPQ) the composition is skewed to polar residues. Residues 218–245 (RSSEERFKQAQEAKEVMERQNRRKEQPK) show a composition bias toward basic and acidic residues. Over residues 251-268 (PVQPAPAPSAPAANPSPA) the composition is skewed to pro residues. A compositionally biased stretch (basic and acidic residues) spans 280 to 297 (ARPDKKRDDFDREEEGPR). Residues 302–318 (NRSSQNQVRNQRNSNWN) are compositionally biased toward low complexity. The region spanning 432–599 (ERPPVVTIMG…TVLLVAEIQE (168 aa)) is the tr-type G domain. Positions 441-448 (GHVDHGKT) are G1. A GTP-binding site is contributed by 441 to 448 (GHVDHGKT). Positions 466-470 (GITQH) are G2. Residues 487-490 (DTPG) are G3. GTP-binding positions include 487–491 (DTPGH) and 541–544 (NKID). The interval 541-544 (NKID) is G4. A G5 region spans residues 577–579 (SAK).

It belongs to the TRAFAC class translation factor GTPase superfamily. Classic translation factor GTPase family. IF-2 subfamily.

Its subcellular location is the cytoplasm. One of the essential components for the initiation of protein synthesis. Protects formylmethionyl-tRNA from spontaneous hydrolysis and promotes its binding to the 30S ribosomal subunits. Also involved in the hydrolysis of GTP during the formation of the 70S ribosomal complex. The sequence is that of Translation initiation factor IF-2 from Streptococcus sanguinis (strain SK36).